Reading from the N-terminus, the 559-residue chain is Amino-acid acetyltransferase, mitochondrial (559 aa).

The disordered stretch occupies residues 162 to 188 (RLGPKPGSEDPTSELDFTPPETHTLPP). The region spanning 362–538 (LPVQVFHSVS…GSAGLSYVED (177 aa)) is the N-acetyltransferase domain.

Belongs to the acetyltransferase family.

The protein resides in the mitochondrion. It catalyses the reaction L-glutamate + acetyl-CoA = N-acetyl-L-glutamate + CoA + H(+). It functions in the pathway amino-acid biosynthesis; L-arginine biosynthesis; N(2)-acetyl-L-ornithine from L-glutamate: step 1/4. In terms of biological role, N-acetylglutamate synthase involved in arginine biosynthesis. The protein is Amino-acid acetyltransferase, mitochondrial (ARG2) of Laccaria bicolor (strain S238N-H82 / ATCC MYA-4686) (Bicoloured deceiver).